A 146-amino-acid polypeptide reads, in one-letter code: 1,4-dihydroxy-2-naphthoyl-CoA hydrolase (146 aa).

Residue Asp15 is part of the active site.

This sequence belongs to the 4-hydroxybenzoyl-CoA thioesterase family. DHNA-CoA hydrolase subfamily.

The catalysed reaction is 1,4-dihydroxy-2-naphthoyl-CoA + H2O = 1,4-dihydroxy-2-naphthoate + CoA + H(+). The protein operates within cofactor biosynthesis; phylloquinone biosynthesis. Its pathway is quinol/quinone metabolism; 1,4-dihydroxy-2-naphthoate biosynthesis; 1,4-dihydroxy-2-naphthoate from chorismate: step 7/7. In terms of biological role, catalyzes the hydrolysis of 1,4-dihydroxy-2-naphthoyl-CoA (DHNA-CoA) to 1,4-dihydroxy-2-naphthoate (DHNA), a reaction involved in phylloquinone (vitamin K1) biosynthesis. The chain is 1,4-dihydroxy-2-naphthoyl-CoA hydrolase from Picosynechococcus sp. (strain ATCC 27264 / PCC 7002 / PR-6) (Agmenellum quadruplicatum).